Reading from the N-terminus, the 185-residue chain is Ribosome-recycling factor (185 aa).

The protein belongs to the RRF family.

It is found in the cytoplasm. Functionally, responsible for the release of ribosomes from messenger RNA at the termination of protein biosynthesis. May increase the efficiency of translation by recycling ribosomes from one round of translation to another. The polypeptide is Ribosome-recycling factor (Dichelobacter nodosus (strain VCS1703A)).